A 473-amino-acid polypeptide reads, in one-letter code: Arginine biosynthesis bifunctional protein ArgJ, mitochondrial (473 aa).

Substrate-binding residues include Thr201, Lys230, Thr241, Glu328, Asn468, and Thr473. The active-site Nucleophile is Thr241.

It belongs to the ArgJ family. Heterodimer of an alpha and a beta chain. In terms of processing, the alpha and beta chains are autoproteolytically processed from a single precursor protein within the mitochondrion.

It is found in the mitochondrion matrix. The catalysed reaction is N(2)-acetyl-L-ornithine + L-glutamate = N-acetyl-L-glutamate + L-ornithine. It catalyses the reaction L-glutamate + acetyl-CoA = N-acetyl-L-glutamate + CoA + H(+). It participates in amino-acid biosynthesis; L-arginine biosynthesis; L-ornithine and N-acetyl-L-glutamate from L-glutamate and N(2)-acetyl-L-ornithine (cyclic): step 1/1. The protein operates within amino-acid biosynthesis; L-arginine biosynthesis; N(2)-acetyl-L-ornithine from L-glutamate: step 1/4. In terms of biological role, catalyzes two activities which are involved in the cyclic version of arginine biosynthesis: the synthesis of acetylglutamate from glutamate and acetyl-CoA, and of ornithine by transacetylation between acetylornithine and glutamate. The polypeptide is Arginine biosynthesis bifunctional protein ArgJ, mitochondrial (Blastomyces gilchristii (strain SLH14081) (Blastomyces dermatitidis)).